Reading from the N-terminus, the 254-residue chain is Glucosamine-6-phosphate deaminase (254 aa).

Catalysis depends on Asp-65, which acts as the Proton acceptor; for enolization step. The active-site For ring-opening step is Asn-134. His-136 (proton acceptor; for ring-opening step) is an active-site residue. Catalysis depends on Glu-141, which acts as the For ring-opening step.

It belongs to the glucosamine/galactosamine-6-phosphate isomerase family. NagB subfamily.

It catalyses the reaction alpha-D-glucosamine 6-phosphate + H2O = beta-D-fructose 6-phosphate + NH4(+). It participates in amino-sugar metabolism; N-acetylneuraminate degradation; D-fructose 6-phosphate from N-acetylneuraminate: step 5/5. Its function is as follows. Catalyzes the reversible isomerization-deamination of glucosamine 6-phosphate (GlcN6P) to form fructose 6-phosphate (Fru6P) and ammonium ion. This Corynebacterium aurimucosum (strain ATCC 700975 / DSM 44827 / CIP 107346 / CN-1) (Corynebacterium nigricans) protein is Glucosamine-6-phosphate deaminase.